The primary structure comprises 646 residues: Preterminal protein (646 aa).

The Nuclear localization signal signature appears at 357-366; that stretch reads RLPVRRRRRR. At Ser555 the chain carries O-(5'-phospho-DNA)-serine. Residues 619–646 form a disordered region; sequence LHADVPLPPLQANPHPPLPPDARPQRTM. The segment covering 624–640 has biased composition (pro residues); it reads PLPPLQANPHPPLPPDA.

This sequence belongs to the adenoviridae terminal protein family. Heterodimer with the polymerase; this heterodimer binds to bp 9 to 18 of the genome. Interacts with host POU2F1; POU2F1 binds to the auxiliary sequences in the inverted terminal repeats and tethers the pTP-POL heterodimer to the origin DNA thereby participating in the assembly of the pre-initiation complex (POL-TP-DBP-NFIA-POU2F1). Preterminal protein is used to replicate viral genome, upon genomic encapsidation it is processed first into iTP and finally into TP by adenovirus protease.

Its subcellular location is the host nucleus matrix. Functionally, protein covalently bound to the viral DNA that acts as a primer for viral genomic replication by DNA strand displacement. Assembles on the viral origin of replication in an initiation complex with viral polymerase, DBP, host NFIA and host POU2F1/OCT1. During initiation, the polymerase covalently couples the first dCTP with Ser-580 of pTP. The terminal protein stimulates the template activity over 20 fold compared to protein-free templates. Neo-synthesized viral genomes are linked to two preterminal proteins, one for each 5' end. These new genomes are encapsidated in the nucleus, and during capsid maturation by viral protease, preterminal protein is first cleaved into intermediary (iTP), then into mature TP. May play a role in host nuclear matrix localization of genomic DNA. The sequence is that of Preterminal protein from Homo sapiens (Human).